The primary structure comprises 197 residues: Peptidyl-tRNA hydrolase (197 aa).

Y23 is a tRNA binding site. H28 functions as the Proton acceptor in the catalytic mechanism. TRNA contacts are provided by F73, N75, and N121.

It belongs to the PTH family. Monomer.

It localises to the cytoplasm. The enzyme catalyses an N-acyl-L-alpha-aminoacyl-tRNA + H2O = an N-acyl-L-amino acid + a tRNA + H(+). In terms of biological role, hydrolyzes ribosome-free peptidyl-tRNAs (with 1 or more amino acids incorporated), which drop off the ribosome during protein synthesis, or as a result of ribosome stalling. Functionally, catalyzes the release of premature peptidyl moieties from peptidyl-tRNA molecules trapped in stalled 50S ribosomal subunits, and thus maintains levels of free tRNAs and 50S ribosomes. The polypeptide is Peptidyl-tRNA hydrolase (Frankia alni (strain DSM 45986 / CECT 9034 / ACN14a)).